Here is a 435-residue protein sequence, read N- to C-terminus: Ribosomal protein uS12 methylthiotransferase RimO (435 aa).

In terms of domain architecture, MTTase N-terminal spans 2–118 (KKFHIVKLGC…IVEKIENGEY (117 aa)). Positions 11, 47, 81, 150, 154, and 157 each coordinate [4Fe-4S] cluster. The Radical SAM core domain maps to 136–364 (IPDSHYAYVK…MTVQSEISKN (229 aa)). The TRAM domain maps to 367–435 (EKYIGETLEV…EYDLEGEIVE (69 aa)).

Belongs to the methylthiotransferase family. RimO subfamily. It depends on [4Fe-4S] cluster as a cofactor.

It localises to the cytoplasm. It catalyses the reaction L-aspartate(89)-[ribosomal protein uS12]-hydrogen + (sulfur carrier)-SH + AH2 + 2 S-adenosyl-L-methionine = 3-methylsulfanyl-L-aspartate(89)-[ribosomal protein uS12]-hydrogen + (sulfur carrier)-H + 5'-deoxyadenosine + L-methionine + A + S-adenosyl-L-homocysteine + 2 H(+). Functionally, catalyzes the methylthiolation of an aspartic acid residue of ribosomal protein uS12. The protein is Ribosomal protein uS12 methylthiotransferase RimO of Petrotoga mobilis (strain DSM 10674 / SJ95).